Consider the following 132-residue polypeptide: Small ribosomal subunit protein uS8 (132 aa).

It belongs to the universal ribosomal protein uS8 family. As to quaternary structure, part of the 30S ribosomal subunit. Contacts proteins S5 and S12.

One of the primary rRNA binding proteins, it binds directly to 16S rRNA central domain where it helps coordinate assembly of the platform of the 30S subunit. The sequence is that of Small ribosomal subunit protein uS8 from Brevibacillus brevis (strain 47 / JCM 6285 / NBRC 100599).